The following is a 589-amino-acid chain: Probable translation initiation factor IF-2 (589 aa).

Positions valine 3–arginine 224 constitute a tr-type G domain. The interval glycine 12–threonine 19 is G1. Glycine 12 to threonine 19 contributes to the GTP binding site. A G2 region spans residues methionine 37–histidine 41. The interval aspartate 78 to glycine 81 is G3. GTP contacts are provided by residues aspartate 78–histidine 82 and asparagine 132–aspartate 135. A G4 region spans residues asparagine 132–aspartate 135. The G5 stretch occupies residues serine 200 to valine 202.

The protein belongs to the TRAFAC class translation factor GTPase superfamily. Classic translation factor GTPase family. IF-2 subfamily.

Function in general translation initiation by promoting the binding of the formylmethionine-tRNA to ribosomes. Seems to function along with eIF-2. This chain is Probable translation initiation factor IF-2, found in Pyrobaculum neutrophilum (strain DSM 2338 / JCM 9278 / NBRC 100436 / V24Sta) (Thermoproteus neutrophilus).